A 66-amino-acid chain; its full sequence is Large ribosomal subunit protein uL29 (66 aa).

The protein belongs to the universal ribosomal protein uL29 family.

In Borrelia recurrentis (strain A1), this protein is Large ribosomal subunit protein uL29.